A 109-amino-acid polypeptide reads, in one-letter code: ATP synthase subunit c (109 aa).

The next 2 membrane-spanning stretches (helical) occupy residues 42–62 (YIGTGITMLAAGAVGLMQGFS) and 88–108 (LALAEAVAIYALIVSILIIFV).

Belongs to the ATPase C chain family. F-type ATPases have 2 components, F(1) - the catalytic core - and F(0) - the membrane proton channel. F(1) has five subunits: alpha(3), beta(3), gamma(1), delta(1), epsilon(1). F(0) has three main subunits: a(1), b(2) and c(10-14). The alpha and beta chains form an alternating ring which encloses part of the gamma chain. F(1) is attached to F(0) by a central stalk formed by the gamma and epsilon chains, while a peripheral stalk is formed by the delta and b chains.

Its subcellular location is the cell membrane. Functionally, f(1)F(0) ATP synthase produces ATP from ADP in the presence of a proton or sodium gradient. F-type ATPases consist of two structural domains, F(1) containing the extramembraneous catalytic core and F(0) containing the membrane proton channel, linked together by a central stalk and a peripheral stalk. During catalysis, ATP synthesis in the catalytic domain of F(1) is coupled via a rotary mechanism of the central stalk subunits to proton translocation. Its function is as follows. Key component of the F(0) channel; it plays a direct role in translocation across the membrane. A homomeric c-ring of between 10-14 subunits forms the central stalk rotor element with the F(1) delta and epsilon subunits. This is ATP synthase subunit c from Ureaplasma parvum serovar 3 (strain ATCC 27815 / 27 / NCTC 11736).